A 96-amino-acid polypeptide reads, in one-letter code: Small ribosomal subunit protein bS6 (96 aa).

It belongs to the bacterial ribosomal protein bS6 family.

In terms of biological role, binds together with bS18 to 16S ribosomal RNA. The sequence is that of Small ribosomal subunit protein bS6 from Gloeobacter violaceus (strain ATCC 29082 / PCC 7421).